Here is an 832-residue protein sequence, read N- to C-terminus: Mechanosensitive cation channel TMEM63B (832 aa).

Topologically, residues 1–40 are extracellular; it reads MLPFLLATLGTTALNNSNPKDYCYSARIRSTVLQGLPFGG. A helical membrane pass occupies residues 41 to 65; that stretch reads VPTVLALDFMCFLALLFLFSILRKV. Cys51 is lipidated: S-palmitoyl cysteine. Over 66-145 the chain is Cytoplasmic; it reads AWDYGRLALV…KDDEIRDKCG (80 aa). The short motif at 86–88 is the Mediates endoplasmic reticulum retention element; it reads RDR. Residues Ser111, Ser113, Ser114, and Ser115 each carry the phosphoserine modification. Cys126 carries the S-palmitoyl cysteine lipid modification. Residues 146–178 form a helical membrane-spanning segment; it reads GDAVHYLSFQRHIIGLLVVVGVLSVGIVLPVNF. Topologically, residues 179-202 are extracellular; sequence SGDLLENNAYSFGRTTIANLKSGN. A helical membrane pass occupies residues 203 to 227; that stretch reads NLLWLHTSFAFLYLLLTVYSMRRHT. Topologically, residues 228 to 427 are cytoplasmic; that stretch reads SKMRYKEDDL…IYWEHLSIRG (200 aa). Residues 231–426 are intracellular linker IL2; confers mechanosensitivity; sequence RYKEDDLVKR…NIYWEHLSIR (196 aa). 2 S-palmitoyl cysteine lipidation sites follow: Cys382 and Cys398. The helical transmembrane segment at 428 to 457 threads the bilayer; sequence FIWWLRCLVINVVLFILLFFLTTPAIIITT. Over 458–472 the chain is Extracellular; that stretch reads MDKFNVTKPVEYLNN. N-linked (GlcNAc...) asparagine glycosylation is present at Asn462. Residues 473-502 form a helical membrane-spanning segment; the sequence is PIITQFFPTLLLWCFSALLPTIVYYSAFFE. Residues 503-506 are Cytoplasmic-facing; sequence AHWT. A helical membrane pass occupies residues 507 to 543; that stretch reads RSGENRTTMHKCYTFLIFMVLLLPSLGLSSLDLFFRW. At 544 to 566 the chain is on the extracellular side; the sequence is LFDKKFLAEAAIRFECVFLPDNG. The helical transmembrane segment at 567–599 threads the bilayer; it reads AFFVNYVIASAFIGNAMDLLRIPGLLMYMIRLC. A gating helix region spans residues 567–599; sequence AFFVNYVIASAFIGNAMDLLRIPGLLMYMIRLC. The Cytoplasmic portion of the chain corresponds to 600-619; the sequence is LARSAAERRNVKRHQAYEFQ. A helical transmembrane segment spans residues 620-638; the sequence is FGAAYAWMMCVFTVVMTYS. Over 639–641 the chain is Extracellular; sequence ITC. Residues 642 to 666 form a helical membrane-spanning segment; sequence PIIVPFGLMYMLLKHLVDRYNLYYA. Topologically, residues 667–673 are cytoplasmic; that stretch reads YLPAKLD. Residues 674-702 traverse the membrane as a helical segment; that stretch reads KKIHSGAVNQVVAAPILCLFWLLFFSTMR. At 703-707 the chain is on the extracellular side; that stretch reads TGFLA. A helical transmembrane segment spans residues 708 to 728; sequence PTSMFTFVVLVITIVICLCHV. 2 S-palmitoyl cysteine lipidation sites follow: Cys726 and Cys729. The Cytoplasmic portion of the chain corresponds to 729-832; sequence CFGHFKYLSA…DSLIENEIHQ (104 aa). The segment at 780 to 814 is disordered; that stretch reads EVDGDGDGAPGSSGDEPPSSSSQDEELLMPPDALT. A compositionally biased stretch (low complexity) spans 789–801; sequence PGSSGDEPPSSSS.

This sequence belongs to the CSC1 (TC 1.A.17) family. Monomer. Interacts with SLC19A2; interaction is required for the phospholipid scramblase activity. In terms of processing, palmitoylation is required for localization to the plasma membrane and stability. Post-translationally, N-Glycosylated.

It is found in the cell membrane. It localises to the endoplasmic reticulum membrane. The protein localises to the lysosome membrane. Its subcellular location is the early endosome membrane. The catalysed reaction is Ca(2+)(in) = Ca(2+)(out). It catalyses the reaction Mg(2+)(in) = Mg(2+)(out). The enzyme catalyses K(+)(in) = K(+)(out). It carries out the reaction Na(+)(in) = Na(+)(out). The catalysed reaction is Cs(+)(in) = Cs(+)(out). It catalyses the reaction a 1,2-diacyl-sn-glycero-3-phosphocholine(in) = a 1,2-diacyl-sn-glycero-3-phosphocholine(out). The enzyme catalyses a sphingomyelin(in) = a sphingomyelin(out). In terms of biological role, mechanosensitive cation channel with low conductance and high activation threshold. Osmosensitive cation channel preferentially activated by hypotonic stress. Also acts as a phospholipid scramblase in response to changes in membrane structure: upon changes in membrane curvature and thickness, alters its conformation and translocates phospholipids, such as phosphatidylcholine and sphingomyelin, thereby controlling plasma membrane lipid distribution. Forms a heterodimer with SLC19A2, which mediates phospholipid scramblase activity following Ca(2+) stimulation. Expressed in excitatory neurons of the subfornical organ and functions as a thirst receptor that mediates neuronal response to hyperosmolality to drive thirst and drinking behavior. Facilitates intestinal motility by promoting proliferation of intestinal stem cells. Essential for the baby's first breath and respiration throughout life. Upon lung inflation conducts cation currents in alveolar type 1 and 2 cells triggering lamellar body exocytosis and surfactant secretion into airspace. Acts as an osmosensor in cochlear outer hair cells (OHCs) where it mediates calcium influx and regulatory volume decrease response. Required for the maintenance of OHC morphology, OHC survival and normal hearing. In Homo sapiens (Human), this protein is Mechanosensitive cation channel TMEM63B.